The sequence spans 2177 residues: Mediator of RNA polymerase II transcription subunit 12 (2177 aa).

The segment at 12-35 (RPLKRPRLGPPDVYPQDPKQKEDE) is disordered. Position 80 is an N6-acetyllysine (Lys-80). Position 166 is a phosphotyrosine (Tyr-166). Disordered stretches follow at residues 323 to 344 (QSTSTLPTTPAPQPPTSSTPST), 627 to 669 (GAPG…MDID), 690 to 717 (TMPCEGKGSPSPEKPDVEKEVKPPPKEK), and 1241 to 1266 (TVTGGTEELPEEEGGGGSGGRRQGGR). Ser-635, Ser-665, Ser-698, and Ser-700 each carry phosphoserine. Residues 702-717 (EKPDVEKEVKPPPKEK) show a composition bias toward basic and acidic residues. A phosphoserine mark is found at Ser-1258 and Ser-1269. A compositionally biased stretch (low complexity) spans 1394–1411 (AETGSSSGSTASNMPSSS). 3 disordered regions span residues 1394 to 1415 (AETGSSSGSTASNMPSSSKTKP), 1450 to 1474 (ELEKGQHLGSSSRKERDRQKQKSMS), and 1738 to 1829 (YLEP…PGSI). Composition is skewed to basic and acidic residues over residues 1450 to 1469 (ELEKGQHLGSSSRKERDRQK) and 1758 to 1771 (EPEKKAPEPPKTDK). An interaction with CTNNB1 and GLI3 region spans residues 1616–2051 (LAKKLQKELG…VRSTAILPEQ (436 aa)). A compositionally biased stretch (basic residues) spans 1784–1793 (KKSTKGKKRS). At Lys-1798 the chain carries N6-acetyllysine. Position 1899 is an asymmetric dimethylarginine; alternate (Arg-1899). Position 1899 is an omega-N-methylarginine; alternate (Arg-1899). Arg-1910 carries the post-translational modification Omega-N-methylarginine. Disordered stretches follow at residues 1919–1938 (QGMLGQSSVHQMTPSSSYGL) and 1967–1989 (SYSSQPYQSTHPSTNPTLVDPTR). Polar residues predominate over residues 1927 to 1938 (VHQMTPSSSYGL). Over residues 1967–1980 (SYSSQPYQSTHPST) the composition is skewed to low complexity. Asymmetric dimethylarginine occurs at positions 1994 and 2015. Low complexity-rich tracts occupy residues 2115 to 2125 (QHQQQQQQQAA), 2133 to 2149 (SQPQFQRQGLQQTQQQQ), and 2158 to 2171 (LQQQLSNTQPQPST). 2 disordered regions span residues 2115–2149 (QHQQQQQQQAAPPQPQPQSQPQFQRQGLQQTQQQQ) and 2158–2177 (LQQQLSNTQPQPSTNIFGRY).

Belongs to the Mediator complex subunit 12 family. As to quaternary structure, component of the Mediator complex, which is composed of MED1, MED4, MED6, MED7, MED8, MED9, MED10, MED11, MED12, MED13, MED13L, MED14, MED15, MED16, MED17, MED18, MED19, MED20, MED21, MED22, MED23, MED24, MED25, MED26, MED27, MED29, MED30, MED31, CCNC, CDK8 and CDC2L6/CDK11. The MED12, MED13, CCNC and CDK8 subunits form a distinct module termed the CDK8 module. Mediator containing the CDK8 module is less active than Mediator lacking this module in supporting transcriptional activation. Individual preparations of the Mediator complex lacking one or more distinct subunits have been variously termed ARC, CRSP, DRIP, PC2, SMCC and TRAP. Also interacts with CTNNB1 and GLI3. Ubiquitous.

Its subcellular location is the nucleus. Its function is as follows. Component of the Mediator complex, a coactivator involved in the regulated transcription of nearly all RNA polymerase II-dependent genes. Mediator functions as a bridge to convey information from gene-specific regulatory proteins to the basal RNA polymerase II transcription machinery. Mediator is recruited to promoters by direct interactions with regulatory proteins and serves as a scaffold for the assembly of a functional pre-initiation complex with RNA polymerase II and the general transcription factors. This subunit may specifically regulate transcription of targets of the Wnt signaling pathway and SHH signaling pathway. The sequence is that of Mediator of RNA polymerase II transcription subunit 12 (MED12) from Homo sapiens (Human).